The following is an 88-amino-acid chain: Selenoprotein W (88 aa).

The segment at residues 10–13 (CGAU) is a cross-link (cysteinyl-selenocysteine (Cys-Sec); redox-active). Sec13 is a non-standard amino acid (selenocysteine). Cys37 is subject to S-glutathionyl cysteine.

This sequence belongs to the SelWTH family. Selenoprotein W subfamily. As to quaternary structure, interacts with DPYSL2, PRDX1, YWHAB, YWHAG, HSP70 and HSP90. As to expression, in the embryo, expressed in the developing nervous system and in mesoderm-derived tissues such as heart and limbs. In the adult, predominantly expressed in brain, skeletal muscle and heart.

Its subcellular location is the cytoplasm. In terms of biological role, plays a role as a glutathione (GSH)-dependent antioxidant. May be involved in a redox-related process. May play a role in the myopathies of selenium deficiency. In Mus musculus (Mouse), this protein is Selenoprotein W.